We begin with the raw amino-acid sequence, 291 residues long: Phosphate import ATP-binding protein PstB (291 aa).

The ABC transporter domain maps to 43-286 (ANVKDLSFWY…PKHAMTEEYI (244 aa)). Residue 75–82 (GASGCGKS) coordinates ATP.

It belongs to the ABC transporter superfamily. Phosphate importer (TC 3.A.1.7) family. As to quaternary structure, the complex is composed of two ATP-binding proteins (PstB), two transmembrane proteins (PstC and PstA) and a solute-binding protein (PstS).

Its subcellular location is the cell inner membrane. It carries out the reaction phosphate(out) + ATP + H2O = ADP + 2 phosphate(in) + H(+). In terms of biological role, part of the ABC transporter complex PstSACB involved in phosphate import. Responsible for energy coupling to the transport system. The protein is Phosphate import ATP-binding protein PstB of Alcaligenes faecalis.